A 1117-amino-acid chain; its full sequence is Guanylate cyclase D (1117 aa).

The first 66 residues, 1-66, serve as a signal peptide directing secretion; that stretch reads MAGLQQGCHF…ADSLSLLAWA (66 aa). Topologically, residues 67–479 are extracellular; sequence RETFTLGVLG…CIRGVQPLGS (413 aa). Cys-121 and Cys-149 form a disulfide bridge. Residues 480–500 traverse the membrane as a helical segment; it reads LLTLTIACVLALVGGFLAYFI. Topologically, residues 501–1117 are cytoplasmic; it reads RLGLQQLRLL…RKSGEAGPGP (617 aa). The tract at residues 529–557 is disordered; that stretch reads TPSRRRPHVDSGSESRSVVDGGSPRSVTQ. A Protein kinase domain is found at 541 to 812; sequence SESRSVVDGG…PSLDQIYTQF (272 aa). Residues 874-915 are interaction with NCALD; that stretch reads MGTTVEPEYFDQVTIYFSDIVGFTTISALSEPIEVVGFLNDL. One can recognise a Guanylate cyclase domain in the interval 887 to 1017; it reads TIYFSDIVGF…DTVNTASRME (131 aa). The disordered stretch occupies residues 1096–1117; that stretch reads GFAKARQGLAEPRKSGEAGPGP.

This sequence belongs to the adenylyl cyclase class-4/guanylyl cyclase family. In terms of assembly, interacts (via the catalytic domain) with NCALD. In terms of tissue distribution, found in a subset of olfactory neurons in the main olfactory epithelium.

Its subcellular location is the cell projection. It is found in the cilium membrane. It carries out the reaction GTP = 3',5'-cyclic GMP + diphosphate. With respect to regulation, activated by Ca(2+). In terms of biological role, functions as an olfactory receptor activated by urine odorants, uroguanylin and guanylin and as well by the volatile semiochemicals carbon disulfide (CS2) and carbon dioxide (CO2). Has guanylate cyclase activity upon binding of the ligand. Activation of GUCY2D neurons leads to the cGMP-dependent activation of the CNGA3 channels, membrane depolarization and an increase in action potential frequency. Signaling pathways activated by GUCY2D may trigger social behaviors such as acquisition of food preference. This Mus musculus (Mouse) protein is Guanylate cyclase D.